The primary structure comprises 38 residues: Photosystem II reaction center protein L (38 aa).

A helical transmembrane segment spans residues 17 to 37 (SLFWGLLLIFILAVLFSSYFF).

This sequence belongs to the PsbL family. In terms of assembly, PSII is composed of 1 copy each of membrane proteins PsbA, PsbB, PsbC, PsbD, PsbE, PsbF, PsbH, PsbI, PsbJ, PsbK, PsbL, PsbM, PsbT, PsbX, PsbY, PsbZ, Psb30/Ycf12, at least 3 peripheral proteins of the oxygen-evolving complex and a large number of cofactors. It forms dimeric complexes.

Its subcellular location is the plastid. The protein localises to the chloroplast thylakoid membrane. Functionally, one of the components of the core complex of photosystem II (PSII). PSII is a light-driven water:plastoquinone oxidoreductase that uses light energy to abstract electrons from H(2)O, generating O(2) and a proton gradient subsequently used for ATP formation. It consists of a core antenna complex that captures photons, and an electron transfer chain that converts photonic excitation into a charge separation. This subunit is found at the monomer-monomer interface and is required for correct PSII assembly and/or dimerization. This chain is Photosystem II reaction center protein L, found in Guillardia theta (Cryptophyte).